The primary structure comprises 434 residues: Tol-Pal system protein TolB (434 aa).

The N-terminal stretch at 1 to 21 (MIVRRALALAALALAASPALA) is a signal peptide. Residues 411–434 (GDRQTPVTSGKTDLAAPAWGPLAP) form a disordered region.

The protein belongs to the TolB family. In terms of assembly, the Tol-Pal system is composed of five core proteins: the inner membrane proteins TolA, TolQ and TolR, the periplasmic protein TolB and the outer membrane protein Pal. They form a network linking the inner and outer membranes and the peptidoglycan layer.

The protein localises to the periplasm. Functionally, part of the Tol-Pal system, which plays a role in outer membrane invagination during cell division and is important for maintaining outer membrane integrity. The polypeptide is Tol-Pal system protein TolB (Anaeromyxobacter dehalogenans (strain 2CP-C)).